The sequence spans 534 residues: Peptide chain release factor 3 (534 aa).

Positions Ser-9–Gln-278 constitute a tr-type G domain. GTP is bound by residues Ser-18–Thr-25, Asp-86–His-90, and Asn-140–Asp-143.

The protein belongs to the TRAFAC class translation factor GTPase superfamily. Classic translation factor GTPase family. PrfC subfamily.

It localises to the cytoplasm. In terms of biological role, increases the formation of ribosomal termination complexes and stimulates activities of RF-1 and RF-2. It binds guanine nucleotides and has strong preference for UGA stop codons. It may interact directly with the ribosome. The stimulation of RF-1 and RF-2 is significantly reduced by GTP and GDP, but not by GMP. In Stenotrophomonas maltophilia (strain K279a), this protein is Peptide chain release factor 3.